Reading from the N-terminus, the 186-residue chain is Dihydrofolate reductase (186 aa).

In terms of domain architecture, DHFR spans 3-183 (KFSLIVAVCA…IQYQYRIYEK (181 aa)). NADP(+) is bound by residues Ala9 and 15 to 21 (GIGIKGD). 29-34 (ELKYFS) is a binding site for substrate. NADP(+) is bound at residue 53–55 (RKT). Position 69 (Arg69) interacts with substrate. Residues 75 to 77 (TRD) and 116 to 123 (GGNAVYKE) contribute to the NADP(+) site.

This sequence belongs to the dihydrofolate reductase family.

The enzyme catalyses (6S)-5,6,7,8-tetrahydrofolate + NADP(+) = 7,8-dihydrofolate + NADPH + H(+). The protein operates within cofactor biosynthesis; tetrahydrofolate biosynthesis; 5,6,7,8-tetrahydrofolate from 7,8-dihydrofolate: step 1/1. Its function is as follows. Key enzyme in folate metabolism. Catalyzes an essential reaction for de novo glycine and purine synthesis, and for DNA precursor synthesis. This is Dihydrofolate reductase (DHFR) from Aedes albopictus (Asian tiger mosquito).